The sequence spans 295 residues: Thioredoxin-related transmembrane protein 2 (295 aa).

An N-terminal signal peptide occupies residues 1–48 (MAVLAPLIALVYSVPRLSRWLARPYCLLSALLSIAFLLVRKLPPICNG). The Extracellular portion of the chain corresponds to 49–102 (LPTQREDGNPCDFDWREVEILMFLSAIVMMKNRRSITVEQHVGNIFMFSKVANA). The chain crosses the membrane as a helical span at residues 103-125 (ILFFRLDIRMGLLYLTLCIVFLM). The Thioredoxin domain occupies 114–269 (LLYLTLCIVF…LYQRAKKHSK (156 aa)). The Cytoplasmic portion of the chain corresponds to 126–295 (TCKPPLYMGP…VPDGENKKDK (170 aa)). Phosphoserine is present on residues serine 211 and serine 243. A disordered region spans residues 266-295 (KHSKGGDMSEEKPVDPAPTTVPDGENKKDK). Basic and acidic residues predominate over residues 269–279 (KGGDMSEEKPV). A Di-lysine motif motif is present at residues 292 to 295 (KKDK).

In terms of assembly, monomer. Homodimer; disulfide-linked. Occurs in both reduced and oxidized monomeric form. Oxidative conditions increase homodimerization. Interacts with CANX. Interacts with ATP2A2.

The protein resides in the endoplasmic reticulum membrane. Its subcellular location is the mitochondrion membrane. Functionally, endoplasmic reticulum and mitochondria-associated protein that probably functions as a regulator of cellular redox state and thereby regulates protein post-translational modification, protein folding and mitochondrial activity. Indirectly regulates neuronal proliferation, migration, and organization in the developing brain. In Mus musculus (Mouse), this protein is Thioredoxin-related transmembrane protein 2 (Tmx2).